The primary structure comprises 263 residues: Lens fiber major intrinsic protein (263 aa).

Residues 1-9 lie on the Cytoplasmic side of the membrane; it reads MWELRSASF. Residues 10-29 traverse the membrane as a helical segment; sequence WRAICAEFFASLFYVFFGLG. Residues 30-41 are Extracellular-facing; the sequence is ASLRWAPGPLHV. Residues 42-59 traverse the membrane as a helical segment; it reads LQVALAFGLALATLVQAV. Residues 60–61 are Cytoplasmic-facing; it reads GH. The discontinuously helical intramembrane region spans 62–77; the sequence is ISGAHVNPAVTFAFLV. The short motif at 68-70 is the NPA 1 element; it reads NPA. The Cytoplasmic portion of the chain corresponds to 78 to 82; the sequence is GSQMS. Residues 83–106 traverse the membrane as a helical segment; sequence LLRAICYMVAQLLGAVAGAAVLYS. The Extracellular portion of the chain corresponds to 107–127; it reads VTPPAVRGNLALNTLHPGVSV. A helical membrane pass occupies residues 128 to 148; sequence GQATIVEIFLTLQFVLCIFAT. Residues 149 to 156 lie on the Cytoplasmic side of the membrane; the sequence is YDERRNGR. Residues 157–175 traverse the membrane as a helical segment; that stretch reads LGSVALAVGFSLTLGHLFG. Residues 176–178 lie on the Extracellular side of the membrane; it reads MYY. The segment at residues 179-193 is an intramembrane region (discontinuously helical); sequence TGAGMNPARSFAPAI. The NPA 2 motif lies at 184 to 186; that stretch reads NPA. Residues 194 to 200 lie on the Extracellular side of the membrane; it reads LTRNFTN. A helical membrane pass occupies residues 201–222; the sequence is HWVYWVGPVIGAGLGSLLYDFL. Topologically, residues 223-263 are cytoplasmic; the sequence is LFPRLKSVSERLSILKGSRPSESNGQPEVTGEPVELKTQAL. The interval 227–237 is interaction with CALM; it reads LKSVSERLSIL. S235 bears the Phosphoserine mark. A disordered region spans residues 239–263; that stretch reads GSRPSESNGQPEVTGEPVELKTQAL. Residue S243 is modified to Phosphoserine; by PKA. At S245 the chain carries Phosphoserine. N246 is subject to Deamidated asparagine.

It belongs to the MIP/aquaporin (TC 1.A.8) family. In terms of assembly, homotetramer; each monomer provides an independent water pore. Two homotetramers on opposing membranes can dimerize, forming a cell-cell junction. Interacts with CALM; the calcium-calmodulin/CALM complex interacts with the cytoplasmic domains of two aquaporins, leading to channel closure. Interacts with BFSP1 (via C-terminus); prevents calcium-dependent inhibition of the water channel activity. In terms of processing, fatty acylated at Met-1 and Lys-238. The acyl modifications, in decreasing order of ion abundance, are: oleoyl (C18:1) &gt; palmitoyl (C16:0) &gt; stearoyl (C18:0) &gt; eicosenoyl (C20:1) &gt; dihomo-gamma-linolenoyl (C20:3) &gt; palmitoleoyl (C16:1) &gt; eicosadienoyl (C20:2). Subject to partial proteolytic cleavage in the eye lens core. Partial proteolysis promotes interactions between tetramers from adjoining membranes. Major component of lens fiber junctions.

It is found in the cell membrane. The protein localises to the cell junction. It carries out the reaction H2O(in) = H2O(out). The water channel activity is inhibited by calcium through calmodulin/CALM. Functionally, aquaporins form homotetrameric transmembrane channels, with each monomer independently mediating water transport across the plasma membrane along its osmotic gradient. Specifically expressed in lens fiber cells, this aquaporin is crucial for maintaining lens water homeostasis and transparency. Beyond water permeability, it also acts as a cell-to-cell adhesion molecule, forming thin junctions between lens fiber cells that are essential for maintaining the ordered structure and transparency of the lens. The sequence is that of Lens fiber major intrinsic protein from Bos taurus (Bovine).